Here is a 233-residue protein sequence, read N- to C-terminus: DnaA regulatory inactivator Hda (233 aa).

Belongs to the DnaA family. HdA subfamily. The active form seems to be an ADP-bound monomer. Forms the RIDA complex (regulatory inactivation of DnaA) of ATP-DnaA, ADP-Hda and the DNA-loaded beta sliding clamp (dnaN).

In terms of biological role, mediates the interaction of DNA replication initiator protein DnaA with DNA polymerase subunit beta sliding clamp (dnaN). Stimulates hydrolysis of ATP-DnaA to ADP-DnaA, rendering DnaA inactive for reinitiation, a process called regulatory inhibition of DnaA or RIDA. In Escherichia fergusonii (strain ATCC 35469 / DSM 13698 / CCUG 18766 / IAM 14443 / JCM 21226 / LMG 7866 / NBRC 102419 / NCTC 12128 / CDC 0568-73), this protein is DnaA regulatory inactivator Hda.